Consider the following 302-residue polypeptide: Putative peptide permease protein BOV_A0350 (302 aa).

Residues 1-22 (MRSSIHASRLRKMGQSIPASTG) form a disordered region. Transmembrane regions (helical) follow at residues 38–58 (IFGL…PLWL), 101–121 (LLVA…IGAI), 147–167 (IFLL…VVVI), 200–222 (AGLG…VVYA), 230–250 (ILLE…AASW), and 268–288 (WQWL…NFIG). Positions 97 to 288 (GRISLLVAVS…LAVLAINFIG (192 aa)) constitute an ABC transmembrane type-1 domain.

It belongs to the binding-protein-dependent transport system permease family. The complex is composed of two ATP-binding proteins (BOV_A0347 and BOV_A0348), two transmembrane proteins (BOV_A0350 and BOV_A0351) and a solute-binding protein (BOV_A0352).

The protein localises to the cell inner membrane. Its function is as follows. Probably part of an ABC transporter complex that could be involved in peptide import. Probably responsible for the translocation of the substrate across the membrane. In Brucella ovis (strain ATCC 25840 / 63/290 / NCTC 10512), this protein is Putative peptide permease protein BOV_A0350.